The primary structure comprises 206 residues: Large ribosomal subunit protein uL4 (206 aa).

The protein belongs to the universal ribosomal protein uL4 family. As to quaternary structure, part of the 50S ribosomal subunit.

Its function is as follows. One of the primary rRNA binding proteins, this protein initially binds near the 5'-end of the 23S rRNA. It is important during the early stages of 50S assembly. It makes multiple contacts with different domains of the 23S rRNA in the assembled 50S subunit and ribosome. Functionally, forms part of the polypeptide exit tunnel. This is Large ribosomal subunit protein uL4 from Bradyrhizobium diazoefficiens (strain JCM 10833 / BCRC 13528 / IAM 13628 / NBRC 14792 / USDA 110).